The following is a 483-amino-acid chain: 6-phosphogluconate dehydrogenase, decarboxylating (483 aa).

Residues 10 to 15 (GLAVMG) and 33 to 35 (NRT) contribute to the NADP(+) site. Lys-38 is subject to N6-acetyllysine. Ser-57 is modified (phosphoserine). Lys-59 is subject to N6-acetyllysine. NADP(+) is bound by residues 75–77 (VKA) and Asn-103. Substrate-binding positions include Asn-103 and 129–131 (SGG). Ser-129 is subject to Phosphoserine. Catalysis depends on Lys-184, which acts as the Proton acceptor. 187–188 (HN) provides a ligand contact to substrate. The Proton donor role is filled by Glu-191. Residues Tyr-192, Lys-261, Arg-288, Arg-447, and His-453 each coordinate substrate. 478 to 481 (SSSY) serves as a coordination point for NADP(+).

This sequence belongs to the 6-phosphogluconate dehydrogenase family. As to quaternary structure, homodimer.

Its subcellular location is the cytoplasm. The catalysed reaction is 6-phospho-D-gluconate + NADP(+) = D-ribulose 5-phosphate + CO2 + NADPH. It participates in carbohydrate degradation; pentose phosphate pathway; D-ribulose 5-phosphate from D-glucose 6-phosphate (oxidative stage): step 3/3. Functionally, catalyzes the oxidative decarboxylation of 6-phosphogluconate to ribulose 5-phosphate and CO(2), with concomitant reduction of NADP to NADPH. This chain is 6-phosphogluconate dehydrogenase, decarboxylating (Pgd), found in Mus musculus (Mouse).